A 472-amino-acid chain; its full sequence is Adenosylhomocysteinase (472 aa).

Residues threonine 64, aspartate 138, and glutamate 198 each coordinate substrate. Position 199-201 (199-201 (TTT)) interacts with NAD(+). Positions 228 and 232 each coordinate substrate. NAD(+) contacts are provided by residues asparagine 233, 262–267 (GFGDVG), glutamate 285, asparagine 320, 341–343 (IGH), and asparagine 386.

Belongs to the adenosylhomocysteinase family. NAD(+) serves as cofactor.

The protein resides in the cytoplasm. It carries out the reaction S-adenosyl-L-homocysteine + H2O = L-homocysteine + adenosine. It functions in the pathway amino-acid biosynthesis; L-homocysteine biosynthesis; L-homocysteine from S-adenosyl-L-homocysteine: step 1/1. Its function is as follows. May play a key role in the regulation of the intracellular concentration of adenosylhomocysteine. In Prochlorococcus marinus subsp. pastoris (strain CCMP1986 / NIES-2087 / MED4), this protein is Adenosylhomocysteinase.